The chain runs to 266 residues: Undecaprenyl-diphosphatase (266 aa).

The next 7 helical transmembrane spans lie at 41-61, 82-102, 106-126, 159-179, 191-211, 213-233, and 246-266; these read YAYS…LIYF, LVYI…LYYV, WLVV…AVVL, AVSV…LLLL, FVLV…SEGG, VATA…IITI, and VLVN…RIIF.

Belongs to the UppP family.

The protein resides in the cell membrane. The enzyme catalyses di-trans,octa-cis-undecaprenyl diphosphate + H2O = di-trans,octa-cis-undecaprenyl phosphate + phosphate + H(+). In terms of biological role, catalyzes the dephosphorylation of undecaprenyl diphosphate (UPP). The sequence is that of Undecaprenyl-diphosphatase from Pyrobaculum aerophilum (strain ATCC 51768 / DSM 7523 / JCM 9630 / CIP 104966 / NBRC 100827 / IM2).